A 372-amino-acid polypeptide reads, in one-letter code: Aminomethyltransferase (372 aa).

Belongs to the GcvT family. In terms of assembly, the glycine cleavage system is composed of four proteins: P, T, L and H.

The enzyme catalyses N(6)-[(R)-S(8)-aminomethyldihydrolipoyl]-L-lysyl-[protein] + (6S)-5,6,7,8-tetrahydrofolate = N(6)-[(R)-dihydrolipoyl]-L-lysyl-[protein] + (6R)-5,10-methylene-5,6,7,8-tetrahydrofolate + NH4(+). Its function is as follows. The glycine cleavage system catalyzes the degradation of glycine. The protein is Aminomethyltransferase of Synechocystis sp. (strain ATCC 27184 / PCC 6803 / Kazusa).